Here is a 167-residue protein sequence, read N- to C-terminus: MVAVENPIHRAYLLKIVGEEGLRIVEAMPEEEVTDEHLAEITGISLNTVRKSLYLLYEHRLAIYRRKRDPESGWLTYLWKICPESLDSALEAEVRKLINKLNARLRYEKDHVFYACVNGCARFVFEEASENNFTCPFCQGSLEYMENSTIVEVIEERIKELSAALCS.

The 83-residue stretch at 5-87 (ENPIHRAYLL…LWKICPESLD (83 aa)) folds into the HTH TFE/IIEalpha-type domain.

Belongs to the TFE family. As to quaternary structure, monomer. Interaction with RNA polymerase subunits RpoF and RpoE is necessary for Tfe stimulatory transcription activity. Able to interact with Tbp and RNA polymerase in the absence of DNA promoter. Interacts both with the preinitiation and elongation complexes.

Transcription factor that plays a role in the activation of archaeal genes transcribed by RNA polymerase. Facilitates transcription initiation by enhancing TATA-box recognition by TATA-box-binding protein (Tbp), and transcription factor B (Tfb) and RNA polymerase recruitment. Not absolutely required for transcription in vitro, but particularly important in cases where Tbp or Tfb function is not optimal. It dynamically alters the nucleic acid-binding properties of RNA polymerases by stabilizing the initiation complex and destabilizing elongation complexes. Seems to translocate with the RNA polymerase following initiation and acts by binding to the non template strand of the transcription bubble in elongation complexes. This Methanothrix thermoacetophila (strain DSM 6194 / JCM 14653 / NBRC 101360 / PT) (Methanosaeta thermophila) protein is Transcription factor E.